The primary structure comprises 162 residues: ATP synthase subunit b 1 (162 aa).

A helical transmembrane segment spans residues 1-21; the sequence is MLLTAEFWVAVAFVAFLVIVW.

The protein belongs to the ATPase B chain family. In terms of assembly, F-type ATPases have 2 components, F(1) - the catalytic core - and F(0) - the membrane proton channel. F(1) has five subunits: alpha(3), beta(3), gamma(1), delta(1), epsilon(1). F(0) has three main subunits: a(1), b(2) and c(10-14). The alpha and beta chains form an alternating ring which encloses part of the gamma chain. F(1) is attached to F(0) by a central stalk formed by the gamma and epsilon chains, while a peripheral stalk is formed by the delta and b chains.

Its subcellular location is the cell inner membrane. Its function is as follows. F(1)F(0) ATP synthase produces ATP from ADP in the presence of a proton or sodium gradient. F-type ATPases consist of two structural domains, F(1) containing the extramembraneous catalytic core and F(0) containing the membrane proton channel, linked together by a central stalk and a peripheral stalk. During catalysis, ATP synthesis in the catalytic domain of F(1) is coupled via a rotary mechanism of the central stalk subunits to proton translocation. Functionally, component of the F(0) channel, it forms part of the peripheral stalk, linking F(1) to F(0). The chain is ATP synthase subunit b 1 from Methylorubrum populi (strain ATCC BAA-705 / NCIMB 13946 / BJ001) (Methylobacterium populi).